The chain runs to 267 residues: Orotidine 5'-phosphate decarboxylase (267 aa).

Residues D37, 59 to 61 (KTH), 91 to 100 (DRKFADIGNT), Y217, and R235 contribute to the substrate site. The active-site Proton donor is the K93.

Belongs to the OMP decarboxylase family.

It carries out the reaction orotidine 5'-phosphate + H(+) = UMP + CO2. It participates in pyrimidine metabolism; UMP biosynthesis via de novo pathway; UMP from orotate: step 2/2. The sequence is that of Orotidine 5'-phosphate decarboxylase (URA3) from Kluyveromyces marxianus (Yeast).